A 515-amino-acid polypeptide reads, in one-letter code: Synaptic vesicular amine transporter (515 aa).

The Cytoplasmic segment spans residues 1–20; that stretch reads MALSDLVLLRWLRDSRHSRK. A helical membrane pass occupies residues 21–41; the sequence is LILFIVFLALLLDNMLLTVVV. The Lumenal, vesicle portion of the chain corresponds to 42–130; that stretch reads PIIPSYLYSI…EDRDLLNENV (89 aa). Asn-56, Asn-80, Asn-81, Asn-89, and Asn-111 each carry an N-linked (GlcNAc...) asparagine glycan. The cysteines at positions 118 and 325 are disulfide-linked. The chain crosses the membrane as a helical span at residues 131–151; sequence QVGLLFASKATVQLLTNPFIG. Residues 152 to 160 are Cytoplasmic-facing; sequence LLTNRIGYP. Residues 161–181 traverse the membrane as a helical segment; it reads IPMFAGFCIMFISTVMFAFSS. Residues 182-190 are Lumenal, vesicle-facing; it reads SYAFLLIAR. The helical transmembrane segment at 191-211 threads the bilayer; the sequence is SLQGIGSSCSSVAGMGMLASV. Residues 212-220 are Cytoplasmic-facing; the sequence is YTDDEERGK. The chain crosses the membrane as a helical span at residues 221–243; sequence PMGIALGGLAMGVLVGPPFGSVL. Positions 229 and 233 each coordinate serotonin. The Lumenal, vesicle segment spans residues 244-249; that stretch reads YEFVGK. A helical membrane pass occupies residues 250 to 272; sequence TAPFLVLAALVLLDGAIQLFVLQ. Residues 273 to 292 lie on the Cytoplasmic side of the membrane; that stretch reads PSRVQPESQKGTPLTTLLKD. The helical transmembrane segment at 293-312 threads the bilayer; sequence PYILIAAGSICFANMGIAML. The serotonin site is built by Asn-306, Ile-309, Glu-313, Phe-335, and Tyr-342. Topologically, residues 313 to 329 are lumenal, vesicle; it reads EPALPIWMMETMCSRKW. The helical transmembrane segment at 330–353 threads the bilayer; that stretch reads QLGVAFLPASISYLIGTNIFGILA. The Cytoplasmic segment spans residues 354 to 358; that stretch reads HKMGR. A helical transmembrane segment spans residues 359–379; sequence WLCALLGMVIVGISILCIPFA. The Lumenal, vesicle portion of the chain corresponds to 380–390; that stretch reads KNIYGLIAPNF. A helical transmembrane segment spans residues 391–411; the sequence is GVGFAIGMVDSSMMPIMGYLV. Asp-400 is a serotonin binding site. Residues 412 to 415 lie on the Cytoplasmic side of the membrane; the sequence is DLRH. Residues 416–436 traverse the membrane as a helical segment; that stretch reads VSVYGSVYAIADVAFCMGYAI. A serotonin-binding site is contributed by Tyr-434. Residues 437-441 lie on the Lumenal, vesicle side of the membrane; that stretch reads GPSAG. A helical membrane pass occupies residues 442–463; that stretch reads GAIAKAIGFPWLMTIIGIIDIA. At 464-515 the chain is on the cytoplasmic side; sequence FAPLCFFLRSPPAKEEKMAILMDHNCPIKRKMYTQNNVQSYPIGDDEESESD. Phosphoserine; by CK2 is present on residues Ser-512 and Ser-514.

Belongs to the major facilitator superfamily. Vesicular transporter family. As to quaternary structure, interacts with SLC6A3. In terms of tissue distribution, expressed in the substantia nigra and the tuberomammillary nucleus of the posterior hypothalamus. Expressed in stomach, in particular in varicose nerve fibers and enterochromaffin-like cells in the corpus region (at protein level).

It localises to the cytoplasmic vesicle. The protein localises to the secretory vesicle. Its subcellular location is the synaptic vesicle membrane. The protein resides in the secretory vesicle membrane. It is found in the cell projection. It localises to the axon. The protein localises to the dendrite. It catalyses the reaction serotonin(in) + 2 H(+)(out) = serotonin(out) + 2 H(+)(in). The catalysed reaction is dopamine(in) + 2 H(+)(out) = dopamine(out) + 2 H(+)(in). The enzyme catalyses histamine(in) + 2 H(+)(out) = histamine(out) + 2 H(+)(in). Its activity is regulated as follows. Strongly inhibited by reserpine and tetrabenazine. Also inhibited to a lesser extent by ketanserin and fenfluramine. Reserpine and ketanserin inhibit by blocking the substrate-binding pocket. Tetrabenazine traps SLC18A2/VMAT2 in an occluded conformation and its inhibition is specific to SLC18A2/VMAT2 but not SLC18A1/VMAT1. Electrogenic antiporter that exchanges one cationic monoamine with two intravesicular protons across the membrane of secretory and synaptic vesicles. Uses the electrochemical proton gradient established by the V-type proton-pump ATPase to accumulate high concentrations of monoamines inside the vesicles prior to their release via exocytosis. Transports a variety of catecholamines such as dopamine, adrenaline and noradrenaline, histamine, and indolamines such as serotonin. Regulates the transvesicular monoaminergic gradient that determines the quantal size. Mediates somatodendritic dopamine release in hippocampal neurons, likely as part of a regulated secretory pathway that integrates retrograde synaptic signals. Acts as a primary transporter for striatal dopamine loading ensuring impulse-dependent release of dopamine at the synaptic cleft. Responsible for histamine and serotonin storage and subsequent corelease from mast cell granules. The polypeptide is Synaptic vesicular amine transporter (Slc18a2) (Rattus norvegicus (Rat)).